The following is a 155-amino-acid chain: uncharacterized protein (155 aa).

A mitochondrion-targeting transit peptide spans 1 to 17; that stretch reads MMRGASKRSISSAAVLL. Positions 111–155 are disordered; the sequence is WHRQQKRSQRRRSVAKYEQREEAARVEKEEREARDREMVRELFRR. Positions 113–124 are enriched in basic residues; it reads RQQKRSQRRRSV. Over residues 125-155 the composition is skewed to basic and acidic residues; that stretch reads AKYEQREEAARVEKEEREARDREMVRELFRR.

It belongs to the prokaryotic/mitochondrial release factor family.

The protein localises to the mitochondrion. This is an uncharacterized protein from Saccharomyces cerevisiae (strain ATCC 204508 / S288c) (Baker's yeast).